Reading from the N-terminus, the 408-residue chain is Aminopeptidase T (408 aa).

A divalent metal cation-binding residues include E250, E316, E340, H345, H376, and D378.

It belongs to the peptidase M29 family. Homodimer. Co(2+) is required as a cofactor. Requires Zn(2+) as cofactor. It depends on Mg(2+) as a cofactor.

Metal-dependent exopeptidase. In Thermus aquaticus, this protein is Aminopeptidase T.